The sequence spans 77 residues: NADH-ubiquinone oxidoreductase chain 4L (77 aa).

The next 2 helical transmembrane spans lie at 18–38 and 44–64; these read LMFI…LFSG and MFFY…VVMV.

It belongs to the complex I subunit 4L family.

The protein localises to the mitochondrion membrane. The enzyme catalyses a ubiquinone + NADH + 5 H(+)(in) = a ubiquinol + NAD(+) + 4 H(+)(out). In terms of biological role, core subunit of the mitochondrial membrane respiratory chain NADH dehydrogenase (Complex I) that is believed to belong to the minimal assembly required for catalysis. Complex I functions in the transfer of electrons from NADH to the respiratory chain. The immediate electron acceptor for the enzyme is believed to be ubiquinone. The chain is NADH-ubiquinone oxidoreductase chain 4L (ND4L) from Ascaris suum (Pig roundworm).